A 320-amino-acid polypeptide reads, in one-letter code: MSKKISLKIGILMDSIESINIKKDSSFAILLEAQKRNHIIHYMEMNDLYLRKEQAFARTRLIKLIKNTQKWYQFIKQQSISLSELDVILMRKDPPFNTEFIYSTYILERAEETGVLIINKPKSLRDCNEKIFTSWFPDLITDTLVTRNIFQIRQFWEKYQDIIIKPLDAMGGANIFRIKKNDPNFSVIVENMTNYERKYCMVQNYLPEIKLGDKRILIINGKPIPWCVARIARIGETRANLAAGGEGKIQSLSETDWKIANYLSPTLKKRGLILVGLDVIGDKLTEINVTSPTCICEIESQKNISITGMLLDYIEKKVCL.

The ATP-grasp domain maps to 130 to 315; the sequence is KIFTSWFPDL…ITGMLLDYIE (186 aa). 156–212 contacts ATP; the sequence is WEKYQDIIIKPLDAMGGANIFRIKKNDPNFSVIVENMTNYERKYCMVQNYLPEIKLG. Residues glutamate 286 and asparagine 288 each contribute to the Mg(2+) site.

It belongs to the prokaryotic GSH synthase family. Requires Mg(2+) as cofactor. Mn(2+) serves as cofactor.

The catalysed reaction is gamma-L-glutamyl-L-cysteine + glycine + ATP = glutathione + ADP + phosphate + H(+). It functions in the pathway sulfur metabolism; glutathione biosynthesis; glutathione from L-cysteine and L-glutamate: step 2/2. The protein is Glutathione synthetase of Buchnera aphidicola subsp. Acyrthosiphon pisum (strain APS) (Acyrthosiphon pisum symbiotic bacterium).